Here is a 371-residue protein sequence, read N- to C-terminus: Leu/Ile/Val-binding protein homolog 1 (371 aa).

Residues Met1–Ala23 form the signal peptide.

The protein belongs to the leucine-binding protein family.

Functionally, component of an amino-acid transport system. The chain is Leu/Ile/Val-binding protein homolog 1 from Brucella abortus (strain 2308).